The chain runs to 178 residues: Adenine phosphoribosyltransferase (178 aa).

The protein belongs to the purine/pyrimidine phosphoribosyltransferase family. In terms of assembly, homodimer.

The protein localises to the cytoplasm. It carries out the reaction AMP + diphosphate = 5-phospho-alpha-D-ribose 1-diphosphate + adenine. Its pathway is purine metabolism; AMP biosynthesis via salvage pathway; AMP from adenine: step 1/1. In terms of biological role, catalyzes a salvage reaction resulting in the formation of AMP, that is energically less costly than de novo synthesis. The polypeptide is Adenine phosphoribosyltransferase (Cereibacter sphaeroides (strain ATCC 17029 / ATH 2.4.9) (Rhodobacter sphaeroides)).